Here is a 402-residue protein sequence, read N- to C-terminus: Deoxyguanosinetriphosphate triphosphohydrolase-like protein (402 aa).

Residues Arg-73–Asn-217 form the HD domain.

This sequence belongs to the dGTPase family. Type 2 subfamily.

This chain is Deoxyguanosinetriphosphate triphosphohydrolase-like protein, found in Brucella anthropi (strain ATCC 49188 / DSM 6882 / CCUG 24695 / JCM 21032 / LMG 3331 / NBRC 15819 / NCTC 12168 / Alc 37) (Ochrobactrum anthropi).